The sequence spans 393 residues: uncharacterized protein (393 aa).

Residues 12 to 70 (APLLGSKIKLNIEKLAIGGAGVARHEGMVVFVPQAAPNEEILAEITLVKKNFMEARVVE) form the TRAM domain. Residues cysteine 83, cysteine 89, cysteine 92, and cysteine 166 each coordinate [4Fe-4S] cluster. S-adenosyl-L-methionine-binding residues include glutamine 221, tyrosine 250, glutamate 273, and aspartate 316. The active-site Nucleophile is cysteine 343.

This sequence belongs to the class I-like SAM-binding methyltransferase superfamily. RNA M5U methyltransferase family.

This is an uncharacterized protein from Bdellovibrio bacteriovorus (strain ATCC 15356 / DSM 50701 / NCIMB 9529 / HD100).